Consider the following 827-residue polypeptide: MENPQDIFSSNGGCLSDIVIEKYLVESKESVSHVQLACSMQDCAFPLDGTELCIWNTKDPSHQLLILRGHHQPITAMAFGNKVNPLLICSASLDYVIMWNLDECREKVLQGLVPRGTVMGSLLGKVLCLQLSLDDHVVAVCAGNKIFMLDIETQAVRAELQGHLGPVTAVEFCPWRAGTLISASEDRGFKVWDHCTGSLIYSSSVLSAYPLLSLFIDAESRQLVTGCADGQLWIFSLMDGHHYRRVARVDLRKKTETFSTRRVKSGLCSQPEESQLPSTSALGKGEQVEVTFPVLRLAPCDLSLIPNSACGCLSSENTRCVWIGSSVGLFVFNLANLEVEAALYYKDFQSLSILLAGSCALRNRTADQKVLCLLASLFGGKIAVLEINPAALVRAQQCPSMGQSLSVPASSCVLPTSPLYLGIAKEKSTKAASEQRRAARNVMKDQRLVFHSKVRSSGYASAPHVTMFSPKTNIKSEGKGSSRSRSSCAREAYPVECAVPTKPGPQVAAAPTCTRVCCIQYSGDGQWLACGLANHLLLVFDASLTGTPAVFSGHDGAVNAVCWSQDRRWLLSAARDGTLRMWSARGAELALLLGKDMFSKPIQSAQFYYIDAFILLSSGPEFQLLRYHIDTCKDEIKRYKQKSKSKLICRLSTTGAVDMTSLSAVNDFYSHIVLAAGRNRTVEVFDLNAGCSAAVIAEAHSRPVHQICQNKGSSFTTQQPQAYNLFLTTAIGDGMRLWDLRTLRCERHFEGHPTRGYPCGIAFSPCGRFAACGAEDRHAYVYEMGSSTFSHRLAGHTDTVTGVAFNPSAPQLATATLDGKLQLFLAE.

14 WD repeats span residues 3-57 (NPQD…IWNT), 62-101 (HQLL…MWNL), 112-151 (LVPR…MLDI), 155-194 (AVRA…VWDH), 201-237 (YSSS…IFSL), 292-337 (FPVL…LANL), 344-387 (YYKD…VLEI), 502-542 (KPGP…VFDA), 546-584 (GTPA…MWSA), 590-629 (ALLL…RYHI), 646-687 (KLIC…VFDL), 698-740 (EAHS…LWDL), 746-784 (ERHF…VYEM), and 788-826 (TFSH…LFLA).

This is WD repeat-containing protein 27 (WDR27) from Homo sapiens (Human).